Consider the following 237-residue polypeptide: Chalcone--flavanone isomerase 1 (237 aa).

Residues Thr-48, Asn-113, and Ser-190 each coordinate substrate.

The protein belongs to the chalcone isomerase family.

The enzyme catalyses a chalcone = a flavanone.. The protein operates within secondary metabolite biosynthesis; flavonoid biosynthesis. Its function is as follows. Catalyzes the intramolecular cyclization of bicyclic chalcones into tricyclic (S)-flavanones. Responsible for the isomerization of 4,2',4',6'-tetrahydroxychalcone (also termed chalcone) into naringenin. The chain is Chalcone--flavanone isomerase 1 (CHI1) from Fragaria ananassa (Strawberry).